A 568-amino-acid polypeptide reads, in one-letter code: Probable WRKY transcription factor 34 (568 aa).

Residues 172-236 (ACCAPADDGY…YTGDHIHSKP (65 aa)) constitute a DNA-binding region (WRKY 1). The Zn(2+) site is built by C203, C208, H231, and H233. Disordered regions lie at residues 230 to 252 (DHIH…TGQD) and 337 to 360 (KRRK…EPRV). Positions 366-431 (SDIDILDDGY…YIGKHTHVVP (66 aa)) form a DNA-binding region, WRKY 2. Zn(2+) is bound by residues C397, C402, H426, and H428.

This sequence belongs to the WRKY group I family.

It localises to the nucleus. In terms of biological role, transcription factor. Interacts specifically with the W box (5'-(T)TGAC[CT]-3'), a frequently occurring elicitor-responsive cis-acting element. The polypeptide is Probable WRKY transcription factor 34 (WRKY34) (Arabidopsis thaliana (Mouse-ear cress)).